We begin with the raw amino-acid sequence, 217 residues long: Zinc finger CCHC-type and RNA-binding motif-containing protein 1 (217 aa).

The 79-residue stretch at Ser-10 to Asp-88 folds into the RRM domain. The CCHC-type zinc-finger motif lies at Ser-105–Lys-122. Residues Cys-120–Asp-217 are disordered. Residues Pro-145–Ala-163 show a composition bias toward acidic residues. Phosphoserine occurs at positions 155, 210, and 216.

Component of the U11/U12 snRNPs that are part of the U12-type spliceosome. Interacts with ZRSR1.

The protein resides in the nucleus. It is found in the nucleoplasm. In Rattus norvegicus (Rat), this protein is Zinc finger CCHC-type and RNA-binding motif-containing protein 1 (Zcrb1).